The sequence spans 710 residues: Low-temperature-induced 78 kDa protein (710 aa).

Disordered stretches follow at residues 1–198 (MDQT…LDGQ), 225–269 (YQSK…RDLS), and 305–507 (GFGD…STYT). Residues 14–25 (QHPEEVEHHENG) are compositionally biased toward basic and acidic residues. The segment covering 29-41 (MFRKVKARAKKFK) has biased composition (basic residues). Residues 49 to 58 (QSNEHEQDHD) are compositionally biased toward basic and acidic residues. Positions 59–73 (LVEEDDDDDELEPEV) are enriched in acidic residues. The span at 138–168 (SDKEEKRDVPIHHPLSELSDREESRETHHES) shows a compositional bias: basic and acidic residues. Polar residues predominate over residues 169–187 (LNTPVSLLSGTEDVTSTFA). A run of 5 repeats spans residues 303–316 (PVGFGDESGAELEK), 317–331 (DFPTRSHDFDMKTET), 336–350 (NSPSRSHEFDLKTES), 357–370 (PMGFGSESGAELEK), and 398–412 (NFPVRSHELDLKNES). Positions 303–370 (PVGFGDESGA…GSESGAELEK (68 aa)) are 2 X 14 AA repeats of P-[MV]-G-F-G-[DS]-E-S-G-A-E-L-E-K. Composition is skewed to basic and acidic residues over residues 313-331 (ELEKDFPTRSHDFDMKTET), 340-352 (RSHEFDLKTESGN), 367-380 (ELEKEFDQKNDSGR), 402-418 (RSHELDLKNESDIDKDV), 442-466 (EDKFPARSDDVEVETELGRDPKTET), and 475-487 (SHPKERDEFKESR). Residues 317-412 (DFPTRSHDFD…SHELDLKNES (96 aa)) form a 3 X 15 AA repeats of [DN]-[FS]-P-[STV]-R-S-H-[DE]-[FL]-D-[LM]-K-[NT]-E-[ST] region. Tandem repeats lie at residues 510–514 (FASML), 532–536 (VDEKL), and 550–554 (VTTKL). The 5 X 5 AA repeats of [FV]-[ADT]-[EST]-[KM]-L stretch occupies residues 510-600 (FASMLGYSGE…AFSDMVAEKL (91 aa)). The segment at 537 to 577 (TPVNEKDQETESAVTTKLPISGGGSGVEEQRGEDKSVSGRD) is disordered. Residues 564-577 (EEQRGEDKSVSGRD) are compositionally biased toward basic and acidic residues. Repeat copies occupy residues 579–583 (VAEKL) and 596–600 (VAEKL). A disordered region spans residues 601 to 710 (QIGGEEEKKE…STVVPVQKEL (110 aa)). Residues 605–626 (EEEKKETTTKEVEKISTEKAAS) show a composition bias toward basic and acidic residues. Ser626 carries the post-translational modification Phosphoserine. A compositionally biased stretch (gly residues) spans 638 to 654 (GGGGMVGRIKGWFGGGA). A run of 2 repeats spans residues 648 to 670 (GWFGGGATDEVKPESPHSVEEAP) and 674 to 696 (GWFGGGATEEVKPKSPHSVEESP). A 2 X 23 AA repeats region spans residues 648-696 (GWFGGGATDEVKPESPHSVEEAPKSSGWFGGGATEEVKPKSPHSVEESP). Basic and acidic residues-rich tracts occupy residues 656–670 (DEVKPESPHSVEEAP) and 682–693 (EEVKPKSPHSVE).

It belongs to the LTI78/LTI65 family. Accumulates rapidly in leaves, stems, roots, flower petals, filaments, and sepals during cold-acclimation.

It localises to the cytoplasm. Functionally, involved in responses to abiotic stresses. Regulates probably root elongation in cold conditions. The sequence is that of Low-temperature-induced 78 kDa protein from Arabidopsis thaliana (Mouse-ear cress).